The sequence spans 347 residues: Cell shape-determining protein MreB (347 aa).

ATP contacts are provided by residues 19-21, 165-167, 213-216, and 295-298; these read TAN, GGT, ERIK, and GGAL.

It belongs to the FtsA/MreB family. As to quaternary structure, forms polymers in the presence of ATP. Forms pairs of protofilaments that adopt an antiparallel arrangement and bind to lipids.

It localises to the cytoplasm. Its function is as follows. Forms membrane-associated dynamic filaments that are essential for cell shape determination. Acts by regulating cell wall synthesis and cell elongation, and thus cell shape. A feedback loop between cell geometry and MreB localization may maintain elongated cell shape by targeting cell wall growth to regions of negative cell wall curvature. Required for mid-cell peptidoglycan synthesis and cell division. Directs the localization of the cytosolic peptidoglycan precursor-synthesizing enzyme MurG. Also required for proper chromosome segregation. Directs the segregation of origin-proximal but not origin-distal loci. The polypeptide is Cell shape-determining protein MreB (Caulobacter vibrioides (strain NA1000 / CB15N) (Caulobacter crescentus)).